The sequence spans 76 residues: Gas vesicle protein A1 (76 aa).

2 binds to GvpF1 regions span residues 1–22 and 2–43; these read MAQP…KGVV and AQPD…EARV. Residues 9 to 19 are alpha helix 1; that stretch reads LAEVLDRVLDK. Residues 23–31 are beta-strand 1; the sequence is VDVWARVSL. The tract at residues 32 to 34 is beta turn; it reads VGI. The tract at residues 35–43 is beta-strand 2; it reads EILTVEARV. The alpha helix 2 stretch occupies residues 48-67; sequence VDTFLHYAEEIAKIEQAELT.

Belongs to the gas vesicle GvpA family. Major component of the gas vesicle shell which is 2 nm thick and consists of a single layer of the protein. It forms 4.6 nm-wide ribs nearly perpendicular to the long axis of the vesicle. Modeled as antiparallel homodimers. The ribs form a low-pitch helix rather than a stack of hoops. Interacts with GvpF1 via its N-terminus (residues 1-43) in early growth stages, none of the other GvpG1 to GvpM1 proteins were seen to directly bind GvpA1 in H.volcanii experiments. Might interact with GvpJ1. Might interact with GvpG1, GvpH1, GvpJ1, GvpM1, GvpN1 and GvpO1.

The protein localises to the gas vesicle shell. Gas vesicles are hollow, gas filled proteinaceous nanostructures found in several microbial planktonic microorganisms. They allow positioning of halobacteria at the optimal depth for growth in the poorly aerated shallow brine pools of their habitat. GvpA forms the protein shell. The critical collapse pressure (CCP) of p-vac gas vesicles is 0.66 MPa; mutating residues in p-gvpA to those found in c-gvpA increases the CCP. These residues partially and independently control the width and strength of gas vesicles. In stationary phase gas vesicles, about 30 times more GvpA1 is found than GvpA2. Its function is as follows. Expression of a 9.5 kb p-vac DNA fragment containing 2 divergently transcribed regions (gvpD-gvpE-gvpF-gvpG-gvpH-gvpI-gvpJ-gvpK-gvpL-gvpM and gvpA-gvpC-gvpN-gvpO) allows H.volcanii to produce gas vesicles. All site-directed mutagenesis is tested in H.volcanii. A minimal gas vesicle can be made in H.volcanii by gvpA1-gvpO1 plus gvpF1-gvpG1-gvpJ1-gvpK1-gvpL1-gvpM1; lack of enough GvpJ1 prevents their formation. A similar region restores gas vesicle production in H.halobium without the p-vac locus, but it still has the c-vac locus. This is Gas vesicle protein A1 from Halobacterium salinarum (strain ATCC 700922 / JCM 11081 / NRC-1) (Halobacterium halobium).